Consider the following 829-residue polypeptide: Periplasmic nitrate reductase (829 aa).

A signal peptide (tat-type signal) is located at residues 1–29; it reads MKMTRRAFVKANAAASAAAVAGITLPASA. One can recognise a 4Fe-4S Mo/W bis-MGD-type domain in the interval 41–97; sequence ITWDKAPCRFCGTGCSVLVGTQNGKVVATQGDPEAPVNKGLNCIKGYFLSKIMYGQD. [4Fe-4S] cluster is bound by residues Cys-48, Cys-51, Cys-55, and Cys-83. Mo-bis(molybdopterin guanine dinucleotide) is bound by residues Lys-85, Gln-152, Asn-177, Cys-181, 214 to 221, 245 to 249, 264 to 266, Met-374, Gln-378, Asn-484, 510 to 511, Lys-533, Asp-560, and 718 to 727; these read WGSNMAEM, STYYH, QSD, SD, and TGRVLEHWHT. Position 794 (Phe-794) interacts with substrate. Positions 802 and 819 each coordinate Mo-bis(molybdopterin guanine dinucleotide).

It belongs to the prokaryotic molybdopterin-containing oxidoreductase family. NasA/NapA/NarB subfamily. In terms of assembly, component of the periplasmic nitrate reductase NapAB complex composed of NapA and NapB. Requires [4Fe-4S] cluster as cofactor. The cofactor is Mo-bis(molybdopterin guanine dinucleotide). Post-translationally, predicted to be exported by the Tat system. The position of the signal peptide cleavage has not been experimentally proven.

It localises to the periplasm. It catalyses the reaction 2 Fe(II)-[cytochrome] + nitrate + 2 H(+) = 2 Fe(III)-[cytochrome] + nitrite + H2O. Its function is as follows. Catalytic subunit of the periplasmic nitrate reductase complex NapAB. Receives electrons from NapB and catalyzes the reduction of nitrate to nitrite. This Vibrio campbellii (strain ATCC BAA-1116) protein is Periplasmic nitrate reductase.